Consider the following 523-residue polypeptide: 11-oxo-beta-amyrin 30-oxidase (523 aa).

A helical membrane pass occupies residues 9–29; the sequence is AIWVVLTVILAAIPIWVCHMV. Cys-471 contributes to the heme binding site.

This sequence belongs to the cytochrome P450 family. Heme serves as cofactor. As to expression, expressed in roots, stolons and stems. Not detected in leaves.

The protein localises to the membrane. It catalyses the reaction 11-oxo-beta-amyrin + 3 reduced [NADPH--hemoprotein reductase] + 3 O2 = glycyrrhetinate + 3 oxidized [NADPH--hemoprotein reductase] + 4 H2O + 4 H(+). The enzyme catalyses 11-oxo-beta-amyrin + reduced [NADPH--hemoprotein reductase] + O2 = 30-hydroxy-11-oxo-beta-amyrin + oxidized [NADPH--hemoprotein reductase] + H2O + H(+). The catalysed reaction is 30-hydroxy-11-oxo-beta-amyrin + reduced [NADPH--hemoprotein reductase] + O2 = glycyrrhetaldehyde + oxidized [NADPH--hemoprotein reductase] + 2 H2O + H(+). It carries out the reaction glycyrrhetaldehyde + reduced [NADPH--hemoprotein reductase] + O2 = glycyrrhetinate + oxidized [NADPH--hemoprotein reductase] + H2O + 2 H(+). Involved in the biosynthesis of Glycyrrhetinic acid (GA), a natural product which exhibits anti-inflammatory activity. Involved in the biosynthesis of the triterpenoid saponin glycyrrhizin. Catalyzes three sequential oxidation steps at C-30 of 11-oxo-beta-amyrin. Also able to catalyze C-30 monohydroxylation of beta-amyrin to produce 30-hydroxy-beta-amyrin. May be also responsible for the oxidation at positions C-22 and C-29 in addition to C-30. The chain is 11-oxo-beta-amyrin 30-oxidase from Glycyrrhiza uralensis (Chinese licorice).